Here is a 1263-residue protein sequence, read N- to C-terminus: DNA-directed RNA polymerase subunit beta (1263 aa).

This sequence belongs to the RNA polymerase beta chain family. As to quaternary structure, the RNAP catalytic core consists of 2 alpha, 1 beta, 1 beta' and 1 omega subunit. When a sigma factor is associated with the core the holoenzyme is formed, which can initiate transcription.

It carries out the reaction RNA(n) + a ribonucleoside 5'-triphosphate = RNA(n+1) + diphosphate. In terms of biological role, DNA-dependent RNA polymerase catalyzes the transcription of DNA into RNA using the four ribonucleoside triphosphates as substrates. In Thermotoga maritima (strain ATCC 43589 / DSM 3109 / JCM 10099 / NBRC 100826 / MSB8), this protein is DNA-directed RNA polymerase subunit beta.